The primary structure comprises 98 residues: NADH-ubiquinone oxidoreductase chain 4L (98 aa).

3 helical membrane passes run 2 to 22 (PSIF…MLIF), 37 to 57 (MLSM…TMSF), and 61 to 81 (ILLL…LVTV).

It belongs to the complex I subunit 4L family. In terms of assembly, core subunit of respiratory chain NADH dehydrogenase (Complex I) which is composed of 45 different subunits.

It is found in the mitochondrion inner membrane. The enzyme catalyses a ubiquinone + NADH + 5 H(+)(in) = a ubiquinol + NAD(+) + 4 H(+)(out). Its function is as follows. Core subunit of the mitochondrial membrane respiratory chain NADH dehydrogenase (Complex I) which catalyzes electron transfer from NADH through the respiratory chain, using ubiquinone as an electron acceptor. Part of the enzyme membrane arm which is embedded in the lipid bilayer and involved in proton translocation. The sequence is that of NADH-ubiquinone oxidoreductase chain 4L (MT-ND4L) from Varecia rubra (Red ruffed lemur).